The sequence spans 265 residues: tRNA pseudouridine synthase A (265 aa).

Asp-53 serves as the catalytic Nucleophile. Position 111 (Tyr-111) interacts with substrate.

This sequence belongs to the tRNA pseudouridine synthase TruA family. In terms of assembly, homodimer.

The catalysed reaction is uridine(38/39/40) in tRNA = pseudouridine(38/39/40) in tRNA. Its function is as follows. Formation of pseudouridine at positions 38, 39 and 40 in the anticodon stem and loop of transfer RNAs. The sequence is that of tRNA pseudouridine synthase A from Acinetobacter baumannii (strain SDF).